The primary structure comprises 297 residues: HTH-type transcriptional regulator IlvY (297 aa).

Positions 1–58 constitute an HTH lysR-type domain; it reads MDLRDLKTFLHLAESRHFGRSARAMHVSPSTLSRQIQRLEEDLGQPLFVRDNRTVTLT. The segment at residues 18–37 is a DNA-binding region (H-T-H motif); it reads FGRSARAMHVSPSTLSRQIQ.

This sequence belongs to the LysR transcriptional regulatory family.

It localises to the cytoplasm. In terms of biological role, this protein activates the transcription of the ilvC gene in the presence of acetolactate or acetohydroxybutyrate. IlvY is also a negative regulator of its own expression. The polypeptide is HTH-type transcriptional regulator IlvY (ilvY) (Escherichia coli (strain K12)).